Consider the following 349-residue polypeptide: Anthranilate phosphoribosyltransferase (349 aa).

5-phospho-alpha-D-ribose 1-diphosphate-binding positions include G82, 85-86 (GD), 92-95 (NVST), 110-118 (KHGNRAVSG), and S122. G82 contributes to the anthranilate binding site. Mg(2+) is bound at residue S94. N113 is an anthranilate binding site. R168 is a binding site for anthranilate. Mg(2+)-binding residues include D227 and E228.

It belongs to the anthranilate phosphoribosyltransferase family. As to quaternary structure, homodimer. Requires Mg(2+) as cofactor.

It catalyses the reaction N-(5-phospho-beta-D-ribosyl)anthranilate + diphosphate = 5-phospho-alpha-D-ribose 1-diphosphate + anthranilate. Its pathway is amino-acid biosynthesis; L-tryptophan biosynthesis; L-tryptophan from chorismate: step 2/5. In terms of biological role, catalyzes the transfer of the phosphoribosyl group of 5-phosphorylribose-1-pyrophosphate (PRPP) to anthranilate to yield N-(5'-phosphoribosyl)-anthranilate (PRA). The protein is Anthranilate phosphoribosyltransferase of Pseudomonas fluorescens (strain SBW25).